A 352-amino-acid chain; its full sequence is Glucose-6-phosphatase catalytic subunit 1 (352 aa).

Residues 1 to 27 (MDLLHSWGVELAVYLQTRYGKYEGLFD) lie on the Lumenal side of the membrane. The chain crosses the membrane as a helical span at residues 28-48 (LASTVADLHTTFFWLFPIWFH). Residues 49-56 (LRRDTALR) are Cytoplasmic-facing. Residues 57–77 (LIWVAVIGDWLNLVLKWVLFG) traverse the membrane as a helical segment. Over 78–113 (ERPYWWVHETKFYGAGPAPSLQQFPITCETGPGSPS) the chain is Lumenal. Arg-79 contributes to the substrate binding site. The chain crosses the membrane as a helical span at residues 114–134 (GHAMGAAGVWYVMVTALLSIA). The active-site Proton donor is His-115. The Cytoplasmic portion of the chain corresponds to 135 to 141 (REKQCPP). The helical transmembrane segment at 142-162 (LLYRFLYIGLWMLMGLVELVV) threads the bilayer. The Lumenal segment spans residues 163-166 (CISR). Arg-166 contributes to the substrate binding site. Residues 167 to 187 (VYMAAHFPHQVIAGIITGTLV) form a helical membrane-spanning segment. His-172 serves as the catalytic Nucleophile. Over 188–205 (AEVVSKEKWIYSASLKKY) the chain is Cytoplasmic. A helical membrane pass occupies residues 206–226 (FLITLFLTSFAVGFYVLLKAL). At 227–256 (DVDLLWTMEKAQKWCIRPEWVHLDSAPFAS) the chain is on the lumenal side. The chain crosses the membrane as a helical span at residues 257–276 (LLRNMGSLFGLGLGLHSPFY). At 277–289 (KTTKMRIMSAPLR) the chain is on the cytoplasmic side. Residues 290–310 (IGCIVISVSLLHLLDGWTFSP) traverse the membrane as a helical segment. Residues 311–324 (ENHMTFYALSFGKS) lie on the Lumenal side of the membrane. The chain crosses the membrane as a helical span at residues 325-345 (AVALLIPTTLVPWALSKIYPV). The Cytoplasmic segment spans residues 346-352 (KTEGKNL). Residues 349 to 352 (GKNL) carry the Prevents secretion from ER motif.

This sequence belongs to the glucose-6-phosphatase family.

It is found in the endoplasmic reticulum membrane. The catalysed reaction is D-glucose 6-phosphate + H2O = D-glucose + phosphate. It participates in carbohydrate biosynthesis; gluconeogenesis. Its function is as follows. Hydrolyzes glucose-6-phosphate to glucose in the endoplasmic reticulum. Forms with the glucose-6-phosphate transporter (SLC37A4/G6PT) the complex responsible for glucose production in the terminal step of glycogenolysis and gluconeogenesis. Hence, it is the key enzyme in homeostatic regulation of blood glucose levels. The protein is Glucose-6-phosphatase catalytic subunit 1 (g6pc1) of Haplochromis nubilus (Blue Victoria mouthbrooder).